A 41-amino-acid polypeptide reads, in one-letter code: uncharacterized protein (41 aa).

Positions 1 to 12 (MTRNVVRQEFEA) are enriched in basic and acidic residues. The disordered stretch occupies residues 1–23 (MTRNVVRQEFEAPGKPQDSSQQD).

This is an uncharacterized protein from Homo sapiens (Human).